The sequence spans 546 residues: Glucose-6-phosphate isomerase 1 (546 aa).

The Proton donor role is filled by E353. Active-site residues include H384 and K512.

It belongs to the GPI family.

The protein localises to the cytoplasm. It catalyses the reaction alpha-D-glucose 6-phosphate = beta-D-fructose 6-phosphate. Its pathway is carbohydrate biosynthesis; gluconeogenesis. It participates in carbohydrate degradation; glycolysis; D-glyceraldehyde 3-phosphate and glycerone phosphate from D-glucose: step 2/4. Functionally, catalyzes the reversible isomerization of glucose-6-phosphate to fructose-6-phosphate. The polypeptide is Glucose-6-phosphate isomerase 1 (Colwellia psychrerythraea (strain 34H / ATCC BAA-681) (Vibrio psychroerythus)).